A 194-amino-acid polypeptide reads, in one-letter code: uncharacterized protein (194 aa).

Positions 1–20 (MLYKFTVLLLIYSYLRNLQA) are cleaved as a signal peptide. N-linked (GlcNAc...) asparagine; by host glycosylation is found at asparagine 31, asparagine 72, asparagine 133, and asparagine 157.

This is an uncharacterized protein from Ostreid herpesvirus 1 (isolate France) (OsHV-1).